The following is a 251-amino-acid chain: Acidic leucine-rich nuclear phosphoprotein 32 family member B (251 aa).

LRR repeat units lie at residues 16–40 (PAAVRELVLDNCKSNDGKIEGLTAE), 43–64 (NLEFLSLINVGLISVSNLPKLP), and 65–84 (KLKKLELSENRIFGGLDMLA). Lys-86 is subject to N6-acetyllysine. The stretch at 89–110 (NLTHLNLSGNKLKDISTLEPLK) is one LRR 4 repeat. The LRRCT domain maps to 123 to 161 (CEVTNLNDYRESVFKLLPQLTYLDGYDREDQEAPDSDAE). Over residues 149 to 233 (DREDQEAPDS…DEDEDEEEEE (85 aa)) the composition is skewed to acidic residues. Residues 149 to 251 (DREDQEAPDS…RETDDEGEDD (103 aa)) are disordered. Ser-158 carries the post-translational modification Phosphoserine. Over residues 234–244 (GGKGEKRKRET) the composition is skewed to basic and acidic residues. The Nuclear localization signal signature appears at 239 to 242 (KRKR). Phosphothreonine is present on Thr-244.

This sequence belongs to the ANP32 family. As to quaternary structure, interacts with histones H3 and H4. Interacts with KLF5; this interaction induces promoter region-specific histone incorporation and inhibition of histone acetylation by ANP32B. In terms of assembly, (Microbial infection) Interacts with Sendai virus protein M. (Microbial infection) Interacts with Measles virus protein M. As to quaternary structure, (Microbial infection) Interacts with Hendra virus protein M; this interaction promotes nuclear localization of M. In terms of assembly, (Microbial infection) Interacts with influenza virus B protein PB2; this interaction strongly supports influenza B virus replication. Some glutamate residues are glycylated by TTLL8. This modification occurs exclusively on glutamate residues and results in a glycine chain on the gamma-carboxyl group. Post-translationally, directly cleaved by caspase-3/CASP3. Expressed in heart, lung, pancreas, prostate and in spleen, thymus and placenta.

It is found in the nucleus. The protein localises to the cytoplasm. Its function is as follows. Multifunctional protein that is involved in the regulation of many processes including cell proliferation, apoptosis, cell cycle progression or transcription. Regulates the proliferation of neuronal stem cells, differentiation of leukemic cells and progression from G1 to S phase of the cell cycle. As negative regulator of caspase-3-dependent apoptosis, may act as an antagonist of ANP32A in regulating tissue homeostasis. Exhibits histone chaperone properties, able to recruit histones to certain promoters, thus regulating the transcription of specific genes. Also plays an essential role in the nucleocytoplasmic transport of specific mRNAs via the uncommon nuclear mRNA export receptor XPO1/CRM1. Participates in the regulation of adequate adaptive immune responses by acting on mRNA expression and cell proliferation. In terms of biological role, (Microbial infection) Plays an essential role in influenza A and B viral genome replication. Also plays a role in foamy virus mRNA export from the nucleus to the cytoplasm. This Homo sapiens (Human) protein is Acidic leucine-rich nuclear phosphoprotein 32 family member B (ANP32B).